Here is a 202-residue protein sequence, read N- to C-terminus: MKVRAQVPTVKNATNFNMVADSKTAVGSTLENLKAAIAGETGAHAKYTAFAKAAREQGYEQIARLFEATAAAELIHIGLEYALVAEMEPGYEKPTVAAPSAYSCDLNLISGANGEIYETSDMYPAFIRKAQEEGNSKAVHVFTRAKLAESVHAERYLAAYNDIDAPDDDKFHLCPICGYIHKGEDFEKCPICFRPKDTFTAY.

The Ferritin-like diiron domain maps to 23–168; that stretch reads KTAVGSTLEN…AYNDIDAPDD (146 aa). Residues glutamate 40, glutamate 73, glutamate 115, glutamate 118, glutamate 149, histidine 152, cysteine 174, cysteine 177, cysteine 189, and cysteine 192 each contribute to the Fe cation site. A Rubredoxin-like domain is found at 169 to 202; that stretch reads DKFHLCPICGYIHKGEDFEKCPICFRPKDTFTAY.

As to quaternary structure, homodimer. May possess two rubredoxin-like centers and two hemerythrin-like binuclear-iron centers per dimer.

Its subcellular location is the cytoplasm. In terms of biological role, exhibits NADH peroxidase activity (in vitro). This is Nigerythrin (ngr) from Nitratidesulfovibrio vulgaris (strain ATCC 29579 / DSM 644 / CCUG 34227 / NCIMB 8303 / VKM B-1760 / Hildenborough) (Desulfovibrio vulgaris).